The primary structure comprises 149 residues: D-aminoacyl-tRNA deacylase (149 aa).

The short motif at 137–138 (GP) is the Gly-cisPro motif, important for rejection of L-amino acids element.

This sequence belongs to the DTD family. As to quaternary structure, homodimer.

It localises to the cytoplasm. It catalyses the reaction glycyl-tRNA(Ala) + H2O = tRNA(Ala) + glycine + H(+). The enzyme catalyses a D-aminoacyl-tRNA + H2O = a tRNA + a D-alpha-amino acid + H(+). In terms of biological role, an aminoacyl-tRNA editing enzyme that deacylates mischarged D-aminoacyl-tRNAs. Also deacylates mischarged glycyl-tRNA(Ala), protecting cells against glycine mischarging by AlaRS. Acts via tRNA-based rather than protein-based catalysis; rejects L-amino acids rather than detecting D-amino acids in the active site. By recycling D-aminoacyl-tRNA to D-amino acids and free tRNA molecules, this enzyme counteracts the toxicity associated with the formation of D-aminoacyl-tRNA entities in vivo and helps enforce protein L-homochirality. The protein is D-aminoacyl-tRNA deacylase of Desulfitobacterium hafniense (strain DSM 10664 / DCB-2).